A 785-amino-acid polypeptide reads, in one-letter code: Rho GTPase-activating protein 10 (785 aa).

In terms of domain architecture, BAR spans 7–262 (EFSDCYLDSP…IRQNPKDHKR (256 aa)). Residues 265–372 (QFTAEGYLYV…WLEVLGGKEA (108 aa)) enclose the PH domain. Positions 389–574 (AQLDKMGFTI…ILIENHEKIF (186 aa)) constitute a Rho-GAP domain. The disordered stretch occupies residues 576–708 (TPPDATLPEP…PAVTPPSPKL (133 aa)). Residues 584–595 (EPGPLSAPPNAP) show a composition bias toward pro residues. Positions 598–608 (QSKRQGQRTKR) are enriched in basic residues. Basic and acidic residues predominate over residues 622-632 (GDRPSLPKEDT). The span at 633–650 (PPSSLDSLSSPSPTTATA) shows a compositional bias: low complexity. Residues 675 to 697 (APSQARSSAVQWLNPQSPTTPSC) are compositionally biased toward polar residues. Positions 727–785 (IISRKARAVYPCEAEHSSELSFEIGAIFEDVQTSREPGWLEGTLNGKRGLIPQNYVKLL) constitute an SH3 domain.

Interacts with PKN3. Interacts with caspase-activated PAK2 proteolytic fragment PAK-2p34; the interaction does not affect ARHGAP10 GTPase activation activity towards RHOA and CDC42. Interacts via its SH3 domain with PTK2/FAK1. Interacts with PTK2B/PYK2; the interaction negatively regulates ARHGAP10 GTPase-activating activity. Interacts with MICAL1 and WDR44; complex formation might transit from GRAF2/ARHGAP10-MICAL1 to GRAF2/ARHGAP10-WDR44 complexes.

The protein localises to the cytoplasm. Its subcellular location is the perinuclear region. It is found in the cell membrane. It localises to the endosome membrane. Functionally, GTPase-activating protein that catalyzes the conversion of active GTP-bound Rho GTPases to their inactive GDP-bound form, thus suppressing various Rho GTPase-mediated cellular processes. Also converts Cdc42 to an inactive GDP-bound state. Essential for PTKB2 regulation of cytoskeletal organization via Rho family GTPases. Inhibits PAK2 proteolytic fragment PAK-2p34 kinase activity and changes its localization from the nucleus to the perinuclear region. Stabilizes PAK-2p34 thereby increasing stimulation of cell death. Associates with MICAL1 on the endosomal membrane to promote Rab8-Rab10-dependent tubule extension. After dissociation with MICAL1, recruits WDR44 which connects the endoplasmic reticulum (ER) with the endosomal tubule, thereby participating in the export of a subset of neosynthesized proteins. In Bos taurus (Bovine), this protein is Rho GTPase-activating protein 10 (ARHGAP10).